The sequence spans 85 residues: Toxin 3FTx-Lei1 (85 aa).

Residues 1-21 (MKTLLLSLVVVTFVCLDLAHT) form the signal peptide. Intrachain disulfides connect Cys24-Cys45, Cys27-Cys32, Cys38-Cys63, Cys67-Cys78, and Cys79-Cys84.

The protein belongs to the three-finger toxin family. Ancestral subfamily. Expressed by the venom gland.

The protein localises to the secreted. This chain is Toxin 3FTx-Lei1, found in Leioheterodon madagascariensis (Malagasy giant hognose snake).